A 291-amino-acid chain; its full sequence is ATP synthase gamma chain (291 aa).

It belongs to the ATPase gamma chain family. As to quaternary structure, F-type ATPases have 2 components, CF(1) - the catalytic core - and CF(0) - the membrane proton channel. CF(1) has five subunits: alpha(3), beta(3), gamma(1), delta(1), epsilon(1). CF(0) has three main subunits: a, b and c.

The protein resides in the cell inner membrane. Produces ATP from ADP in the presence of a proton gradient across the membrane. The gamma chain is believed to be important in regulating ATPase activity and the flow of protons through the CF(0) complex. In Cupriavidus necator (strain ATCC 17699 / DSM 428 / KCTC 22496 / NCIMB 10442 / H16 / Stanier 337) (Ralstonia eutropha), this protein is ATP synthase gamma chain.